The chain runs to 132 residues: uncharacterized protein (132 aa).

Residues 1 to 68 (MCSAGELLRG…HTGEPVGDDY (68 aa)) form a disordered region. The helical transmembrane segment at 100 to 120 (VIVIFFWVMLWFLGLQALGLV) threads the bilayer.

It belongs to the FAM241 family.

Its subcellular location is the membrane. This is an uncharacterized protein from Homo sapiens (Human).